The following is a 302-amino-acid chain: Dihydroorotate dehydrogenase B (NAD(+)), catalytic subunit (302 aa).

FMN is bound by residues Ser23 and 47-48 (KS). Substrate contacts are provided by residues Lys47, 71 to 75 (NAMGL), and Asn125. Residue Asn125 coordinates FMN. The active-site Nucleophile is the Cys128. FMN is bound by residues Lys163 and Ile189. 190–191 (NT) contacts substrate. FMN-binding positions include Gly215, 241–242 (GG), and 263–264 (GT).

Belongs to the dihydroorotate dehydrogenase family. Type 1 subfamily. In terms of assembly, heterotetramer of 2 PyrK and 2 PyrD type B subunits. Requires FMN as cofactor.

It is found in the cytoplasm. The enzyme catalyses (S)-dihydroorotate + NAD(+) = orotate + NADH + H(+). Its pathway is pyrimidine metabolism; UMP biosynthesis via de novo pathway; orotate from (S)-dihydroorotate (NAD(+) route): step 1/1. In terms of biological role, catalyzes the conversion of dihydroorotate to orotate with NAD(+) as electron acceptor. The sequence is that of Dihydroorotate dehydrogenase B (NAD(+)), catalytic subunit (pyrD) from Thermococcus kodakarensis (strain ATCC BAA-918 / JCM 12380 / KOD1) (Pyrococcus kodakaraensis (strain KOD1)).